A 56-amino-acid chain; its full sequence is Small ribosomal subunit protein bS21 (56 aa).

Belongs to the bacterial ribosomal protein bS21 family.

The polypeptide is Small ribosomal subunit protein bS21 (rpsU) (Geobacillus stearothermophilus (Bacillus stearothermophilus)).